Here is a 356-residue protein sequence, read N- to C-terminus: Holliday junction branch migration complex subunit RuvB (356 aa).

Residues 4–191 (TDKLATEQRI…FGIVARLEFY (188 aa)) form a large ATPase domain (RuvB-L) region. Residues leucine 30, arginine 31, glycine 72, lysine 75, threonine 76, threonine 77, 138 to 140 (EDY), arginine 181, tyrosine 191, and arginine 228 contribute to the ATP site. Threonine 76 contributes to the Mg(2+) binding site. Residues 192–262 (DAEQLSRIVR…VADAALAMLD (71 aa)) are small ATPAse domain (RuvB-S). The interval 265 to 356 (PVGFDLMDRK…RDEWDTPDGK (92 aa)) is head domain (RuvB-H). Residues arginine 301, arginine 320, and arginine 325 each coordinate DNA.

It belongs to the RuvB family. Homohexamer. Forms an RuvA(8)-RuvB(12)-Holliday junction (HJ) complex. HJ DNA is sandwiched between 2 RuvA tetramers; dsDNA enters through RuvA and exits via RuvB. An RuvB hexamer assembles on each DNA strand where it exits the tetramer. Each RuvB hexamer is contacted by two RuvA subunits (via domain III) on 2 adjacent RuvB subunits; this complex drives branch migration. In the full resolvosome a probable DNA-RuvA(4)-RuvB(12)-RuvC(2) complex forms which resolves the HJ.

It is found in the cytoplasm. The catalysed reaction is ATP + H2O = ADP + phosphate + H(+). The RuvA-RuvB-RuvC complex processes Holliday junction (HJ) DNA during genetic recombination and DNA repair, while the RuvA-RuvB complex plays an important role in the rescue of blocked DNA replication forks via replication fork reversal (RFR). RuvA specifically binds to HJ cruciform DNA, conferring on it an open structure. The RuvB hexamer acts as an ATP-dependent pump, pulling dsDNA into and through the RuvAB complex. RuvB forms 2 homohexamers on either side of HJ DNA bound by 1 or 2 RuvA tetramers; 4 subunits per hexamer contact DNA at a time. Coordinated motions by a converter formed by DNA-disengaged RuvB subunits stimulates ATP hydrolysis and nucleotide exchange. Immobilization of the converter enables RuvB to convert the ATP-contained energy into a lever motion, pulling 2 nucleotides of DNA out of the RuvA tetramer per ATP hydrolyzed, thus driving DNA branch migration. The RuvB motors rotate together with the DNA substrate, which together with the progressing nucleotide cycle form the mechanistic basis for DNA recombination by continuous HJ branch migration. Branch migration allows RuvC to scan DNA until it finds its consensus sequence, where it cleaves and resolves cruciform DNA. The sequence is that of Holliday junction branch migration complex subunit RuvB from Burkholderia cenocepacia (strain HI2424).